The sequence spans 338 residues: MTGNSSNGYGVSLVGSGSATPSQIVSNDQLALRVDTNDEWVKTRTGIRERRIIGADESLTDLCVAAAKAAVDMAGWGVESIEMVLIATSTPDDLFGMAPKVQSKLGATRAVAFDLTAACSGFLFGLVSAAQFLQNGSFKRAVVIGADQLSGWVDWDDRSSCVLFGDGAGAIAIEATAEEDDLIGFKMKSDGSRGDCLNLAQKRNFVPLVESYQTQKGDFSPIKMNGQEVYKFAVREVPSLLKDVLQTYGIVPESLDWLLLHQANQRILNAVADRFSIPHHKVLTNLANYGNTSAATIPIMLDEAVRDGKVQSGHLIASSGFGAGLSWGVALFRWHGPF.

Residues Cys-119 and His-261 contribute to the active site. An ACP-binding region spans residues 262–266 (QANQR). The active site involves Asn-291.

This sequence belongs to the thiolase-like superfamily. FabH family. In terms of assembly, homodimer.

It is found in the cytoplasm. The enzyme catalyses malonyl-[ACP] + acetyl-CoA + H(+) = 3-oxobutanoyl-[ACP] + CO2 + CoA. Its pathway is lipid metabolism; fatty acid biosynthesis. Functionally, catalyzes the condensation reaction of fatty acid synthesis by the addition to an acyl acceptor of two carbons from malonyl-ACP. Catalyzes the first condensation reaction which initiates fatty acid synthesis and may therefore play a role in governing the total rate of fatty acid production. Possesses both acetoacetyl-ACP synthase and acetyl transacylase activities. Its substrate specificity determines the biosynthesis of branched-chain and/or straight-chain of fatty acids. The chain is Beta-ketoacyl-[acyl-carrier-protein] synthase III from Prochlorococcus marinus (strain SARG / CCMP1375 / SS120).